The primary structure comprises 119 residues: Ribonuclease P protein component (119 aa).

The protein belongs to the RnpA family. In terms of assembly, consists of a catalytic RNA component (M1 or rnpB) and a protein subunit.

It carries out the reaction Endonucleolytic cleavage of RNA, removing 5'-extranucleotides from tRNA precursor.. Functionally, RNaseP catalyzes the removal of the 5'-leader sequence from pre-tRNA to produce the mature 5'-terminus. It can also cleave other RNA substrates such as 4.5S RNA. The protein component plays an auxiliary but essential role in vivo by binding to the 5'-leader sequence and broadening the substrate specificity of the ribozyme. The chain is Ribonuclease P protein component from Listeria welshimeri serovar 6b (strain ATCC 35897 / DSM 20650 / CCUG 15529 / CIP 8149 / NCTC 11857 / SLCC 5334 / V8).